We begin with the raw amino-acid sequence, 66 residues long: Large ribosomal subunit protein uL29 (66 aa).

The protein belongs to the universal ribosomal protein uL29 family.

The sequence is that of Large ribosomal subunit protein uL29 from Borrelia turicatae (strain 91E135).